Reading from the N-terminus, the 384-residue chain is 8-amino-7-oxononanoate synthase (384 aa).

Arg21 is a binding site for substrate. Residue 108–109 (GF) coordinates pyridoxal 5'-phosphate. A substrate-binding site is contributed by His133. Pyridoxal 5'-phosphate contacts are provided by Ser179, His207, and Thr233. Residue Lys236 is modified to N6-(pyridoxal phosphate)lysine. Position 352 (Thr352) interacts with substrate.

This sequence belongs to the class-II pyridoxal-phosphate-dependent aminotransferase family. BioF subfamily. In terms of assembly, homodimer. The cofactor is pyridoxal 5'-phosphate.

The catalysed reaction is 6-carboxyhexanoyl-[ACP] + L-alanine + H(+) = (8S)-8-amino-7-oxononanoate + holo-[ACP] + CO2. It participates in cofactor biosynthesis; biotin biosynthesis. Catalyzes the decarboxylative condensation of pimeloyl-[acyl-carrier protein] and L-alanine to produce 8-amino-7-oxononanoate (AON), [acyl-carrier protein], and carbon dioxide. This chain is 8-amino-7-oxononanoate synthase, found in Escherichia fergusonii (strain ATCC 35469 / DSM 13698 / CCUG 18766 / IAM 14443 / JCM 21226 / LMG 7866 / NBRC 102419 / NCTC 12128 / CDC 0568-73).